The primary structure comprises 612 residues: Cryptochrome-2 (612 aa).

The CNT2, binds chromophores to sense blue light and mediate CRY dimerization stretch occupies residues 1–485 (MKMDKKTIVW…TARELLAKAI (485 aa)). Residues 5–134 (KKTIVWFRRD…SVQSYNGDLL (130 aa)) form the Photolyase/cryptochrome alpha/beta domain. Y232 contacts FAD. Positions 235 and 243 each coordinate Mg(2+). 244 to 248 (TSLLS) is an FAD binding site. H355 contacts Mg(2+). Residues N356 and 387 to 389 (DAD) contribute to the FAD site. 356 to 357 (NR) serves as a coordination point for ATP. ATP is bound at residue D406. The tract at residues 486-612 (SRTREAQIMI…TTSLGKNGCK (127 aa)) is CCT2/CCE2, mediates blue light signaling. The interval 539-576 (GSKRVKPEEEEERDMKKSRGFDERELFSTAESSSSSSV) is disordered. The Nuclear localization signal signature appears at 541 to 555 (KRVKPEEEEERDMKK). Residues 551-564 (RDMKKSRGFDEREL) are compositionally biased toward basic and acidic residues. S587 bears the Phosphoserine; by CK1 mark. The tract at residues 590–612 (KNLEGIQDSSDQITTSLGKNGCK) is disordered. Residues 596–612 (QDSSDQITTSLGKNGCK) are compositionally biased toward polar residues. A phosphoserine mark is found at S598 and S599. T603 carries the phosphothreonine; by CK1 modification. The residue at position 605 (S605) is a Phosphoserine.

This sequence belongs to the DNA photolyase class-1 family. Homodimer. Blue-light dependent dimerization. Interacts with COP1 and PHYB in the nucleus. Binds reversibly to CIBs proteins such as BHLH63/CIB1, BHLH78/CIB2, BHLH74/CIB4 and BHLH76/CIB5 after blue light illumination to stimulate their transcription factor activities. Interacts with PIF4 and PIF5 in the nucleus in response to low blue light (LBL). Binds to SPA1 in response to blue light, this interaction prevents SPA1/COP1 complex formation but stimulates interaction with COP1, and thus avoid COP1-dependent degradation of the transcription factors CO and HY5 by the proteasome and promotes hypocotyl elongation and floral initiation. Binding to ATP mediates conformational changes which facilitate flavin binding. Interacts with BIC1 in both darkness and light. Interacts with NRP. Requires FAD as cofactor. (6R)-5,10-methylene-5,6,7,8-tetrahydrofolate serves as cofactor. In terms of processing, phosphorylated by CK1.3 and CK1.4; in response to blue light. Required for degradation. Adopts an open conformation when phosphorylated upon photoexcitation and thus interacts with signaling partner proteins. Not autophosphorylated, even in complex with FAD cofactor. Ubiquitinated; in response to blue light. As to expression, mostly expressed in the shoot meristems and root tips, and, to a lower extent, in the cotyledons, hypocotyls, and roots.

Its subcellular location is the nucleus. The protein localises to the PML body. The protein resides in the cytoplasm. Its function is as follows. Photoreceptor that mediates primarily blue light inhibition of hypocotyl elongation and photoperiodic control of floral initiation, and regulates other light responses, including circadian rhythms, tropic growth, stomata opening, guard cell development, root development, bacterial and viral pathogen responses, abiotic stress responses, cell cycles, programmed cell death, apical dominance, fruit and ovule development, seed dormancy, and magnetoreception. Photoexcited cryptochromes interact with signaling partner proteins to alter gene expression at both transcriptional and post-translational levels and, consequently, regulate the corresponding metabolic and developmental programs. Blue-light absorbing flavoprotein that activates reversible flavin photoreduction via an electron transport chain comprising a tryptophan triad (W-321, W-374 and W-397), or via an alternative electron transport that involves small metabolites, including NADPH, NADH, and ATP. The half-life of the activated signaling state is about 16 minutes. Perceives low blue light (LBL) and responds by directly contacting two bHLH transcription factors, PIF4 and PIF5, at chromatin on E-box variant 5'-CA[CT]GTG-3' to promote their activity and stimulate specific gene expression to adapt global physiology (e.g. hypocotyl elongation and hyponastic growth in low blue light). In response to blue light, binds to CIB proteins (e.g. BHLH63/CIB1 and BHLH76/CIB5) to activate transcription and floral initiation. Mediates blue light-induced gene expression, floral initiation and hypocotyl elongation through the interaction with SPA1 that prevents formation of SPA1/COP1 complex but stimulates COP1 binding, and thus inhibits COP1-mediated degradation of transcription factors (e.g. CO and HY5). Promotes flowering time in continuous light (LL). Involved in shortening the circadian clock period, especially at 27 degrees Celsius, in blue light (BL). Required to maintain clock genes expression rhythm. Triggers nuclear accumulation of ROS in response to blue light illumination. Involved in blue light-dependent stomatal opening, transpiration and inhibition of stem and root growth, probably by regulating abscisic acid (ABA). Regulates the timing of flowering by promoting the expression of 'FLOWERING LOCUS T' (FT) in vascular bundles. Negatively regulated by 'FLOWERING LOCUS C' (FLC). General positive regulator of reversible low light-induced chromatin decompaction. Involved in triggering chromatin decondensation during floral transition. Together with phototropins, involved in phototropism regulation by various blue light fluence; blue light attenuates phototropism in high fluence rates (100 umol.m-2.s-1) but enhances phototropism in low fluence rates (&lt;1.0 umol.m-2.s-1). The effect of near-null magnetic field on flowering is altered by changes of blue light cycle and intensity in a CRY1/CRY2-dependent manner. Involved in the strigolactone signaling that regulates hypocotyl growth in response to blue light. In terms of biological role, confers resistance to turnip crinkle virus (TCV) by preventing COP1-mediated proteasome-mediated degradation of RPP8/HRT, thus promoting its stability in light. Exposure to darkness or blue-light induces degradation of CRY2, and in turn of RPP8/HRT, resulting in susceptibility to TCV. The protein is Cryptochrome-2 of Arabidopsis thaliana (Mouse-ear cress).